A 469-amino-acid chain; its full sequence is Citrate synthase, mitochondrial (469 aa).

Residues 1–31 (MTLLTASSRAAARLLGAKNSSCIIFAARHAS) constitute a mitochondrion transit peptide. Residues His304 and His350 contribute to the active site. Arg359 contacts oxaloacetate. Residue Asp405 is part of the active site. 2 residues coordinate oxaloacetate: Arg431 and Arg451.

It belongs to the citrate synthase family. Homodimer.

It is found in the mitochondrion matrix. It carries out the reaction oxaloacetate + acetyl-CoA + H2O = citrate + CoA + H(+). It functions in the pathway carbohydrate metabolism; tricarboxylic acid cycle; isocitrate from oxaloacetate: step 1/2. Its function is as follows. Key enzyme of the Krebs tricarboxylic acid cycle which catalyzes the synthesis of citrate from acetyl coenzyme A and oxaloacetate. This chain is Citrate synthase, mitochondrial (CS), found in Amblyrhynchus cristatus (Galapagos marine iguana).